We begin with the raw amino-acid sequence, 752 residues long: Glutamate carboxypeptidase 2 (752 aa).

Topologically, residues 1 to 19 are cytoplasmic; the sequence is MWNAQQDSDSAEALGRRQR. Ser10 carries the phosphoserine modification. The chain crosses the membrane as a helical; Signal-anchor for type II membrane protein span at residues 20 to 44; it reads WFCAGTLVLAFTGTFIIGFLFGWFI. Topologically, residues 45–752 are extracellular; sequence KPSNDSTSSV…AAAETLREVD (708 aa). 5 N-linked (GlcNAc...) asparagine glycosylation sites follow: Asn48, Asn78, Asn123, Asn155, and Asn197. Residues Arg212 and Asn259 each coordinate substrate. Ca(2+)-binding residues include Thr271 and Tyr274. An NAALADase region spans residues 276 to 589; it reads ANEYAYRHEF…QVRGAMVFEL (314 aa). Asn338 is a glycosylation site (N-linked (GlcNAc...) asparagine). Residues His379 and Asp389 each coordinate Zn(2+). Glu426 is a binding site for substrate. Glu426 serves as the catalytic Nucleophile; for NAALADase activity. Glu427 provides a ligand contact to Zn(2+). Glu435 and Glu438 together coordinate Ca(2+). Asp455 is a Zn(2+) binding site. N-linked (GlcNAc...) asparagine glycosylation is found at Asn461 and Asn478. Residues 519 to 520, Asn521, 536 to 538, Tyr554, and 554 to 555 each bind substrate; these read SG, RAR, and YH. His555 provides a ligand contact to Zn(2+). Asn615 carries an N-linked (GlcNAc...) asparagine glycan. The active-site Charge relay system is Ser630. Asn640 carries an N-linked (GlcNAc...) asparagine glycan. Catalysis depends on charge relay system residues Asp668 and His691. A substrate-binding site is contributed by 701 to 702; sequence KY.

This sequence belongs to the peptidase M28 family. M28B subfamily. In terms of assembly, homodimer. Zn(2+) serves as cofactor. Widely expressed throughout brain regions with highest levels in the hippocampus, dentate gyrus, priform cortex, choroid plexus of ventricles, pineal gland, anterior lobe of the pituitary gland and supraoptic nucleus. High levels also found in the cerebral cortex, substantia nigra, pontine nucleus and the granule cell layer of cerebellum. Highly expressed in astrocytes and non-myelinating Schwann cells. Also expressed in kidney, localizing to the proximal brush border of the renal tube.

Its subcellular location is the cell membrane. It carries out the reaction Release of an unsubstituted, C-terminal glutamyl residue, typically from Ac-Asp-Glu or folylpoly-gamma-glutamates.. The NAALADase activity is inhibited by beta-NAAG, quisqualic acid and 2-(phosphonomethyl)glutaric acid (PMG). In terms of biological role, has both folate hydrolase and N-acetylated-alpha-linked-acidic dipeptidase (NAALADase) activity. Has a preference for tri-alpha-glutamate peptides. In the intestine, required for the uptake of folate. In the brain, modulates excitatory neurotransmission through the hydrolysis of the neuropeptide, N-aceylaspartylglutamate (NAAG), thereby releasing glutamate. Functionally, also exhibits a dipeptidyl-peptidase IV type activity. In vitro, cleaves Gly-Pro-AMC. The sequence is that of Glutamate carboxypeptidase 2 (Folh1) from Rattus norvegicus (Rat).